A 194-amino-acid chain; its full sequence is Glycerol-3-phosphate acyltransferase (194 aa).

5 helical membrane-spanning segments follow: residues 2 to 22, 51 to 71, 80 to 100, 112 to 132, and 155 to 175; these read LIEILLLAGAYLLGSIPTGLL, SVGIATLVGDCLKGLIPVLAA, WIALAGLAAFLGHVYTVFLGF, VFLGLAPLAVLIALGIFVAVV, and FLSGRPPLVGVTVVIALLVIW.

The protein belongs to the PlsY family. As to quaternary structure, probably interacts with PlsX.

It is found in the cell inner membrane. The enzyme catalyses an acyl phosphate + sn-glycerol 3-phosphate = a 1-acyl-sn-glycero-3-phosphate + phosphate. It functions in the pathway lipid metabolism; phospholipid metabolism. Functionally, catalyzes the transfer of an acyl group from acyl-phosphate (acyl-PO(4)) to glycerol-3-phosphate (G3P) to form lysophosphatidic acid (LPA). This enzyme utilizes acyl-phosphate as fatty acyl donor, but not acyl-CoA or acyl-ACP. The protein is Glycerol-3-phosphate acyltransferase of Geobacter metallireducens (strain ATCC 53774 / DSM 7210 / GS-15).